The sequence spans 503 residues: Maturase K (503 aa).

Belongs to the intron maturase 2 family. MatK subfamily.

It localises to the plastid. Its subcellular location is the chloroplast. Usually encoded in the trnK tRNA gene intron. Probably assists in splicing its own and other chloroplast group II introns. This Vicia faba (Broad bean) protein is Maturase K.